A 135-amino-acid polypeptide reads, in one-letter code: Small ribosomal subunit protein uS12 (135 aa).

A disordered region spans residues 1 to 24 (MPTINQLVRKGRHSKTTKSKSPAL). A compositionally biased stretch (basic residues) spans 9–18 (RKGRHSKTTK). Position 102 is a 3-methylthioaspartic acid (aspartate 102).

The protein belongs to the universal ribosomal protein uS12 family. Part of the 30S ribosomal subunit. Contacts proteins S8 and S17. May interact with IF1 in the 30S initiation complex.

Its function is as follows. With S4 and S5 plays an important role in translational accuracy. In terms of biological role, interacts with and stabilizes bases of the 16S rRNA that are involved in tRNA selection in the A site and with the mRNA backbone. Located at the interface of the 30S and 50S subunits, it traverses the body of the 30S subunit contacting proteins on the other side and probably holding the rRNA structure together. The combined cluster of proteins S8, S12 and S17 appears to hold together the shoulder and platform of the 30S subunit. The chain is Small ribosomal subunit protein uS12 from Lactobacillus delbrueckii subsp. bulgaricus (strain ATCC 11842 / DSM 20081 / BCRC 10696 / JCM 1002 / NBRC 13953 / NCIMB 11778 / NCTC 12712 / WDCM 00102 / Lb 14).